A 94-amino-acid polypeptide reads, in one-letter code: Serine protease inhibitor Kazal-type 13 (94 aa).

Positions 1–23 (MAAFPHKIIFFLVCSTLTHVAFS) are cleaved as a signal peptide. A Kazal-like domain is found at 33 to 94 (RWPKPRCKMY…IKFEKYGKCD (62 aa)). Intrachain disulfides connect C39–C75, C53–C72, and C61–C93. The N-linked (GlcNAc...) asparagine glycan is linked to N55.

The protein resides in the secreted. May be a serine protease inhibitor. Essential for sperm maturation and fertility. Inhibits sperm acrosome reaction, protecting sperm from premature reaction. In Homo sapiens (Human), this protein is Serine protease inhibitor Kazal-type 13 (SPINK13).